The primary structure comprises 1459 residues: Endogenous retrovirus group K member 7 Pol protein (1459 aa).

The 189-residue stretch at 57–245 folds into the Reverse transcriptase domain; the sequence is LEKGHIEPSF…TPFHYLGMQI (189 aa). Positions 161 to 164 match the LPQG motif; it reads LPQG. The YXDD signature appears at 195–198; sequence YIDD. In terms of domain architecture, RNase H type-1 spans 460 to 590; that stretch reads LENALTVFTD…ADLLVSSALI (131 aa). Aspartate 469, glutamate 497, aspartate 517, and aspartate 582 together coordinate Mg(2+). The Integrase-type zinc finger occupies 587–628; sequence SALIKAQELHALTHVNAAGLKNKFDVTWKQAKDIVQHCTQCQ. Residues histidine 596, histidine 600, cysteine 624, and cysteine 627 each coordinate Zn(2+). The 162-residue stretch at 642–803 folds into the Integrase catalytic domain; sequence RGLCPNALWQ…TSAEQHLTGK (162 aa). Positions 811-859 form a DNA-binding region, integrase-type; sequence KLIWWKDNKNKTWEIGKVITWGRGFACVSPGENQLPVWIPTRHLKFYNE.

It belongs to the beta type-B retroviral polymerase family. HERV class-II K(HML-2) pol subfamily.

The enzyme catalyses DNA(n) + a 2'-deoxyribonucleoside 5'-triphosphate = DNA(n+1) + diphosphate. The catalysed reaction is Endonucleolytic cleavage to 5'-phosphomonoester.. Early post-infection, the reverse transcriptase converts the viral RNA genome into double-stranded viral DNA. The RNase H domain of the reverse transcriptase performs two functions. It degrades the RNA template and specifically removes the RNA primer from the RNA/DNA hybrid. Following nuclear import, the integrase catalyzes the insertion of the linear, double-stranded viral DNA into the host cell chromosome. Endogenous Pol proteins may have kept, lost or modified their original function during evolution. This Homo sapiens (Human) protein is Endogenous retrovirus group K member 7 Pol protein (ERVK-7).